We begin with the raw amino-acid sequence, 272 residues long: Granaticin polyketide synthase putative ketoacyl reductase 1 (272 aa).

NAD(+) is bound at residue 21 to 45; sequence LVTGATSGIGLAIARRLAALGARTF. Residue S155 participates in substrate binding. Catalysis depends on Y168, which acts as the Proton acceptor.

The protein belongs to the short-chain dehydrogenases/reductases (SDR) family.

It participates in antibiotic biosynthesis; granaticin biosynthesis. In Streptomyces violaceoruber, this protein is Granaticin polyketide synthase putative ketoacyl reductase 1 (gra-orf5).